We begin with the raw amino-acid sequence, 138 residues long: uncharacterized protein (138 aa).

A MsrB domain is found at 9-133; the sequence is EDEWKKELGP…NSASLEFHNE (125 aa). Zn(2+) is bound by residues Cys49, Cys52, Cys97, and Cys100. Cys122 (nucleophile) is an active-site residue.

This sequence belongs to the MsrB Met sulfoxide reductase family. It depends on Zn(2+) as a cofactor.

The protein localises to the cytoplasm. It localises to the nucleus. This is an uncharacterized protein from Schizosaccharomyces pombe (strain 972 / ATCC 24843) (Fission yeast).